We begin with the raw amino-acid sequence, 120 residues long: MARIAGVNIPNHKHAEIALTAIYGIGRSRAQKICDAAGVVRSAKIKDLTESDMEKLRDEVGRFVVEGDLRREVTMNIKRLMDLGCYRGVRHRRGLPLRGQRTRTNARTRKGPRKAIAGKK.

The disordered stretch occupies residues 94 to 120 (GLPLRGQRTRTNARTRKGPRKAIAGKK).

Belongs to the universal ribosomal protein uS13 family. Part of the 30S ribosomal subunit. Forms a loose heterodimer with protein S19. Forms two bridges to the 50S subunit in the 70S ribosome.

Functionally, located at the top of the head of the 30S subunit, it contacts several helices of the 16S rRNA. In the 70S ribosome it contacts the 23S rRNA (bridge B1a) and protein L5 of the 50S subunit (bridge B1b), connecting the 2 subunits; these bridges are implicated in subunit movement. Contacts the tRNAs in the A and P-sites. This is Small ribosomal subunit protein uS13 from Azoarcus sp. (strain BH72).